The primary structure comprises 103 residues: Small ribosomal subunit protein uS10 (103 aa).

Belongs to the universal ribosomal protein uS10 family. In terms of assembly, part of the 30S ribosomal subunit.

Its function is as follows. Involved in the binding of tRNA to the ribosomes. The polypeptide is Small ribosomal subunit protein uS10 (Hahella chejuensis (strain KCTC 2396)).